We begin with the raw amino-acid sequence, 562 residues long: Nucleoprotein (562 aa).

The tract at residues 53–238 (MRRVKRDDSD…ITQEESQINI (186 aa)) is binding site for the cap structure m7GTP. 2 residues coordinate Mn(2+): D381 and E383. Zn(2+)-binding residues include E391, C498, H501, and C522. D526 is a Mn(2+) binding site.

It belongs to the arenaviridae nucleocapsid protein family. In terms of assembly, homomultimerizes to form the nucleocapsid. Binds to viral genomic RNA. Interacts with glycoprotein G2. Interacts with protein Z; this interaction probably directs the encapsidated genome to budding sites. Interacts with protein L; this interaction does not interfere with Z-L interaction. Interacts with host IKBKE (via Protein kinase domain); the interaction inhibits IKBKE kinase activity.

It is found in the virion. The protein resides in the host cytoplasm. In terms of biological role, encapsidates the genome, protecting it from nucleases. The encapsidated genomic RNA is termed the nucleocapsid (NC). Serves as template for viral transcription and replication. The increased presence of protein N in host cell does not seem to trigger the switch from transcription to replication as observed in other negative strain RNA viruses. Through the interaction with host IKBKE, strongly inhibits the phosphorylation and nuclear translocation of host IRF3, a protein involved in interferon activation pathway, leading to the inhibition of interferon-beta and IRF3-dependent promoters activation. Also encodes a functional 3'-5' exoribonuclease that degrades preferentially dsRNA substrates and thereby participates in the suppression of interferon induction. The polypeptide is Nucleoprotein (Neotoma (wood rats)).